We begin with the raw amino-acid sequence, 432 residues long: Glutamate-1-semialdehyde 2,1-aminomutase (432 aa).

K266 carries the post-translational modification N6-(pyridoxal phosphate)lysine.

It belongs to the class-III pyridoxal-phosphate-dependent aminotransferase family. HemL subfamily. As to quaternary structure, homodimer. Pyridoxal 5'-phosphate serves as cofactor.

It is found in the cytoplasm. It carries out the reaction (S)-4-amino-5-oxopentanoate = 5-aminolevulinate. It functions in the pathway porphyrin-containing compound metabolism; protoporphyrin-IX biosynthesis; 5-aminolevulinate from L-glutamyl-tRNA(Glu): step 2/2. The chain is Glutamate-1-semialdehyde 2,1-aminomutase from Janthinobacterium sp. (strain Marseille) (Minibacterium massiliensis).